The chain runs to 318 residues: Death effector domain-containing protein (318 aa).

Residues 25–103 enclose the DED domain; the sequence is SLHRMFDIVG…RHDLLPYVTL (79 aa). A disordered region spans residues 128-191; the sequence is PRALSDPEPR…SVTPDPKEKQ (64 aa).

As to quaternary structure, interacts with CASP8, CASP10, KRT8, KRT18, CASP3 and FADD. Homodimerizes and heterodimerizes with DEDD2. Post-translationally, exists predominantly in a mono- or diubiquitinated form. In terms of tissue distribution, ubiquitously expressed.

It localises to the cytoplasm. Its subcellular location is the nucleus. It is found in the nucleolus. In terms of biological role, a scaffold protein that directs CASP3 to certain substrates and facilitates their ordered degradation during apoptosis. May also play a role in mediating CASP3 cleavage of KRT18. Regulates degradation of intermediate filaments during apoptosis. May play a role in the general transcription machinery in the nucleus and might be an important regulator of the activity of GTF3C3. Inhibits DNA transcription in vitro. The chain is Death effector domain-containing protein (Dedd) from Mus musculus (Mouse).